The following is a 41-amino-acid chain: Large ribosomal subunit protein bL36 (41 aa).

It belongs to the bacterial ribosomal protein bL36 family.

The polypeptide is Large ribosomal subunit protein bL36 (Ruegeria pomeroyi (strain ATCC 700808 / DSM 15171 / DSS-3) (Silicibacter pomeroyi)).